A 381-amino-acid chain; its full sequence is UDP-N-acetylglucosamine--N-acetylmuramyl-(pentapeptide) pyrophosphoryl-undecaprenol N-acetylglucosamine transferase (381 aa).

Residues 10–12, N124, R165, S190, I245, and Q290 contribute to the UDP-N-acetyl-alpha-D-glucosamine site; that span reads TGG. The segment at 361 to 381 is disordered; it reads WGSPAGQERPGHGPVRPPDLA.

This sequence belongs to the glycosyltransferase 28 family. MurG subfamily.

The protein resides in the cell inner membrane. It catalyses the reaction di-trans,octa-cis-undecaprenyl diphospho-N-acetyl-alpha-D-muramoyl-L-alanyl-D-glutamyl-meso-2,6-diaminopimeloyl-D-alanyl-D-alanine + UDP-N-acetyl-alpha-D-glucosamine = di-trans,octa-cis-undecaprenyl diphospho-[N-acetyl-alpha-D-glucosaminyl-(1-&gt;4)]-N-acetyl-alpha-D-muramoyl-L-alanyl-D-glutamyl-meso-2,6-diaminopimeloyl-D-alanyl-D-alanine + UDP + H(+). It functions in the pathway cell wall biogenesis; peptidoglycan biosynthesis. Its function is as follows. Cell wall formation. Catalyzes the transfer of a GlcNAc subunit on undecaprenyl-pyrophosphoryl-MurNAc-pentapeptide (lipid intermediate I) to form undecaprenyl-pyrophosphoryl-MurNAc-(pentapeptide)GlcNAc (lipid intermediate II). The polypeptide is UDP-N-acetylglucosamine--N-acetylmuramyl-(pentapeptide) pyrophosphoryl-undecaprenol N-acetylglucosamine transferase (Anaeromyxobacter sp. (strain Fw109-5)).